The chain runs to 598 residues: Fumarate reductase flavoprotein subunit (598 aa).

Residues 12–16 (GAGGA), 36–38 (ISK), 44–52 (SHTVAAEGG), 156–158 (HFV), and Asp212 contribute to the FAD site. His45 is modified (tele-8alpha-FAD histidine). Residues His233 and Arg249 contribute to the active site. FAD-binding positions include 356 to 357 (HY), Glu380, and 391 to 397 (RLGSNSL). The segment at 577-598 (AKRVYGGEADAQEKSDKEQANG) is disordered. A compositionally biased stretch (basic and acidic residues) spans 587-598 (AQEKSDKEQANG).

Belongs to the FAD-dependent oxidoreductase 2 family. FRD/SDH subfamily. As to quaternary structure, part of an enzyme complex containing four subunits: a flavoprotein (FrdA), an iron-sulfur protein (FrdB), and two hydrophobic anchor proteins (FrdC and FrdD). Interacts with SdhE. Requires FAD as cofactor.

The protein localises to the cell inner membrane. It carries out the reaction a quinone + succinate = fumarate + a quinol. It catalyses the reaction a menaquinone + succinate = a menaquinol + fumarate. Two distinct, membrane-bound, FAD-containing enzymes are responsible for the catalysis of fumarate and succinate interconversion; the fumarate reductase is used in anaerobic growth, and the succinate dehydrogenase is used in aerobic growth. The chain is Fumarate reductase flavoprotein subunit from Serratia sp. (strain ATCC 39006) (Prodigiosinella confusarubida).